The chain runs to 179 residues: Protein GrpE (179 aa).

A disordered region spans residues 1–20 (MSEETKEEIKNEKVDEEVTE).

The protein belongs to the GrpE family. In terms of assembly, homodimer.

The protein localises to the cytoplasm. In terms of biological role, participates actively in the response to hyperosmotic and heat shock by preventing the aggregation of stress-denatured proteins, in association with DnaK and GrpE. It is the nucleotide exchange factor for DnaK and may function as a thermosensor. Unfolded proteins bind initially to DnaJ; upon interaction with the DnaJ-bound protein, DnaK hydrolyzes its bound ATP, resulting in the formation of a stable complex. GrpE releases ADP from DnaK; ATP binding to DnaK triggers the release of the substrate protein, thus completing the reaction cycle. Several rounds of ATP-dependent interactions between DnaJ, DnaK and GrpE are required for fully efficient folding. This chain is Protein GrpE, found in Lactococcus lactis subsp. cremoris (strain MG1363).